We begin with the raw amino-acid sequence, 147 residues long: Ribosome maturation factor RimP (147 aa).

This sequence belongs to the RimP family.

It localises to the cytoplasm. Functionally, required for maturation of 30S ribosomal subunits. This is Ribosome maturation factor RimP from Legionella pneumophila (strain Lens).